The chain runs to 1083 residues: Carbamoyl phosphate synthase large chain (1083 aa).

The tract at residues 1 to 402 (MPKRTDIRKV…AYMKALRSME (402 aa)) is carboxyphosphate synthetic domain. Arg-129, Arg-169, Gly-175, Gly-176, Glu-208, Val-210, Glu-215, Gly-241, Val-242, His-243, Gln-285, and Glu-299 together coordinate ATP. The 196-residue stretch at 133–328 (KAAMQKIGVA…IAKIAAKLAL (196 aa)) folds into the ATP-grasp 1 domain. Mg(2+) is bound by residues Gln-285, Glu-299, and Asn-301. Residues Gln-285, Glu-299, and Asn-301 each contribute to the Mn(2+) site. An oligomerization domain region spans residues 403–554 (LGRVGLESPE…YSTYEEEDEA (152 aa)). The segment at 555-937 (PPTDRQKVLI…AFAKSQLAAG (383 aa)) is carbamoyl phosphate synthetic domain. The region spanning 679 to 871 (AALIEKLGLK…MAKIAALCMV (193 aa)) is the ATP-grasp 2 domain. ATP contacts are provided by Arg-715, Arg-754, Leu-756, Glu-761, Gly-787, Val-788, His-789, Ser-790, Gln-830, and Glu-842. Residues Gln-830, Glu-842, and Asn-844 each coordinate Mg(2+). Mn(2+) contacts are provided by Gln-830, Glu-842, and Asn-844. The MGS-like domain occupies 938–1078 (VKLPKSGKVF…QEYLGINAAP (141 aa)). The allosteric domain stretch occupies residues 938 to 1083 (VKLPKSGKVF…INAAPPGTRR (146 aa)).

Belongs to the CarB family. In terms of assembly, composed of two chains; the small (or glutamine) chain promotes the hydrolysis of glutamine to ammonia, which is used by the large (or ammonia) chain to synthesize carbamoyl phosphate. Tetramer of heterodimers (alpha,beta)4. It depends on Mg(2+) as a cofactor. Mn(2+) serves as cofactor.

It carries out the reaction hydrogencarbonate + L-glutamine + 2 ATP + H2O = carbamoyl phosphate + L-glutamate + 2 ADP + phosphate + 2 H(+). The catalysed reaction is hydrogencarbonate + NH4(+) + 2 ATP = carbamoyl phosphate + 2 ADP + phosphate + 2 H(+). Its pathway is amino-acid biosynthesis; L-arginine biosynthesis; carbamoyl phosphate from bicarbonate: step 1/1. The protein operates within pyrimidine metabolism; UMP biosynthesis via de novo pathway; (S)-dihydroorotate from bicarbonate: step 1/3. Large subunit of the glutamine-dependent carbamoyl phosphate synthetase (CPSase). CPSase catalyzes the formation of carbamoyl phosphate from the ammonia moiety of glutamine, carbonate, and phosphate donated by ATP, constituting the first step of 2 biosynthetic pathways, one leading to arginine and/or urea and the other to pyrimidine nucleotides. The large subunit (synthetase) binds the substrates ammonia (free or transferred from glutamine from the small subunit), hydrogencarbonate and ATP and carries out an ATP-coupled ligase reaction, activating hydrogencarbonate by forming carboxy phosphate which reacts with ammonia to form carbamoyl phosphate. This is Carbamoyl phosphate synthase large chain from Myxococcus xanthus (strain DK1622).